We begin with the raw amino-acid sequence, 264 residues long: Glucosamine-6-phosphate deaminase (264 aa).

Aspartate 67 functions as the Proton acceptor; for enolization step in the catalytic mechanism. Asparagine 136 acts as the For ring-opening step in catalysis. Histidine 138 acts as the Proton acceptor; for ring-opening step in catalysis. The For ring-opening step role is filled by glutamate 143.

It belongs to the glucosamine/galactosamine-6-phosphate isomerase family. NagB subfamily. Homohexamer.

The enzyme catalyses alpha-D-glucosamine 6-phosphate + H2O = beta-D-fructose 6-phosphate + NH4(+). It functions in the pathway amino-sugar metabolism; N-acetylneuraminate degradation; D-fructose 6-phosphate from N-acetylneuraminate: step 5/5. Catalyzes the reversible isomerization-deamination of glucosamine 6-phosphate (GlcN6P) to form fructose 6-phosphate (Fru6P) and ammonium ion. This is Glucosamine-6-phosphate deaminase from Shewanella woodyi (strain ATCC 51908 / MS32).